The chain runs to 324 residues: Galactosylgalactosylxylosylprotein 3-beta-glucuronosyltransferase 2 (324 aa).

Topologically, residues 1-2 (MK) are cytoplasmic. The chain crosses the membrane as a helical; Signal-anchor for type II membrane protein span at residues 3 to 23 (SALCNRFFILLPWILIVIIML). At 24-324 (DVDPRRPAPQ…YHMDTVNIEV (301 aa)) the chain is on the lumenal side. The segment at 34–78 (LTSRPYFSPHTVGCGGSRVPLRRSSPGRDAAEKRNESRPQLQPEP) is disordered. Asparagine 68 carries an N-linked (GlcNAc...) asparagine glycan. Aspartate 188 contributes to the Mn(2+) binding site. Glutamate 274 acts as the Proton acceptor in catalysis. Asparagine 293 carries an N-linked (GlcNAc...) asparagine glycan.

This sequence belongs to the glycosyltransferase 43 family. In terms of assembly, homodimer. Requires Mn(2+) as cofactor. As to expression, expressed in the cerebral cortex, cerebellum and whole brain.

It localises to the golgi apparatus membrane. It catalyses the reaction 3-O-(beta-D-galactosyl-(1-&gt;3)-beta-D-galactosyl-(1-&gt;4)-beta-D-xylosyl)-L-seryl-[protein] + UDP-alpha-D-glucuronate = 3-O-(beta-D-GlcA-(1-&gt;3)-beta-D-Gal-(1-&gt;3)-beta-D-Gal-(1-&gt;4)-beta-D-Xyl)-L-seryl-[protein] + UDP + H(+). Its pathway is protein modification; protein glycosylation. Functionally, involved in the biosynthesis of L2/HNK-1 carbohydrate epitope on both glycolipids and glycoproteins. Substrates include asialo-orosomucoid (ASOR), paragloboside (lacto-N-neotetraosylceramide), Gal-beta-1,4-GlcNAc-beta-1,3-Gal-beta-1,4-Glc-pyridylamine and Gal-beta-1,3-GlcNAc-beta-1,3-Gal-beta-1,4-Glc-pyridylamine. This Rattus norvegicus (Rat) protein is Galactosylgalactosylxylosylprotein 3-beta-glucuronosyltransferase 2 (B3gat2).